The sequence spans 506 residues: Nostrin (506 aa).

Residues 1-260 (MRDPLTDCPY…AISKIDIEKD (260 aa)) enclose the F-BAR domain. Position 114 is a phosphoserine (Ser-114). A coiled-coil region spans residues 160 to 222 (SMTEKEKRKL…LELEKERIQL (63 aa)). The region spanning 292–372 (AMDKERRKSL…SYKLSSMLAE (81 aa)) is the REM-1 domain. The 60-residue stretch at 438–497 (LSSRLCKALYSFQARQDDELNLEKGDIVIIHEKKEGGWWFGSLNGKKGHFPAAYVEELPS) folds into the SH3 domain. Phosphoserine is present on Ser-479.

Homotrimer. Interacts with DAB2. Interacts with NOS3, DNM2, WASL and CAV1. Interacts (via SH3 domain) with DNM2; this interaction allows the recruitment of NOS3 to dynamin-positive structures. Expressed at highest levels in heart, kidney, placenta and lung, and at lowest levels in brain, thymus and spleen. Present in vascular endothelial cells and placenta. Over-expressed in placenta from women with pre-eclampsia (at protein level).

The protein localises to the cell membrane. It localises to the cytoplasmic vesicle. It is found in the cytoplasm. The protein resides in the cytoskeleton. Its subcellular location is the nucleus. Multivalent adapter protein which may decrease NOS3 activity by inducing its translocation away from the plasma membrane. In Homo sapiens (Human), this protein is Nostrin.